The following is a 324-amino-acid chain: Glyoxylate/hydroxypyruvate reductase B (324 aa).

Residues Arg237 and Glu266 contribute to the active site. The active-site Proton donor is the His285.

It belongs to the D-isomer specific 2-hydroxyacid dehydrogenase family. GhrB subfamily. Homodimer.

Its subcellular location is the cytoplasm. It carries out the reaction glycolate + NADP(+) = glyoxylate + NADPH + H(+). It catalyses the reaction (R)-glycerate + NAD(+) = 3-hydroxypyruvate + NADH + H(+). The catalysed reaction is (R)-glycerate + NADP(+) = 3-hydroxypyruvate + NADPH + H(+). In terms of biological role, catalyzes the NADPH-dependent reduction of glyoxylate and hydroxypyruvate into glycolate and glycerate, respectively. In Escherichia fergusonii (strain ATCC 35469 / DSM 13698 / CCUG 18766 / IAM 14443 / JCM 21226 / LMG 7866 / NBRC 102419 / NCTC 12128 / CDC 0568-73), this protein is Glyoxylate/hydroxypyruvate reductase B.